The sequence spans 445 residues: Tubulin beta chain (445 aa).

Gln-11, Glu-69, Ser-138, Gly-142, Thr-143, Gly-144, Asn-204, and Asn-226 together coordinate GTP. Glu-69 contributes to the Mg(2+) binding site.

Belongs to the tubulin family. Dimer of alpha and beta chains. A typical microtubule is a hollow water-filled tube with an outer diameter of 25 nm and an inner diameter of 15 nM. Alpha-beta heterodimers associate head-to-tail to form protofilaments running lengthwise along the microtubule wall with the beta-tubulin subunit facing the microtubule plus end conferring a structural polarity. Microtubules usually have 13 protofilaments but different protofilament numbers can be found in some organisms and specialized cells. The cofactor is Mg(2+).

It localises to the cytoplasm. The protein resides in the cytoskeleton. Functionally, tubulin is the major constituent of microtubules, a cylinder consisting of laterally associated linear protofilaments composed of alpha- and beta-tubulin heterodimers. Microtubules grow by the addition of GTP-tubulin dimers to the microtubule end, where a stabilizing cap forms. Below the cap, tubulin dimers are in GDP-bound state, owing to GTPase activity of alpha-tubulin. This Leishmania mexicana protein is Tubulin beta chain.